The sequence spans 163 residues: MRCPKCQSLKSSVIDSRQAEDGNTIRRRRSCDQCGQRFTTYERIEEKTLVVVKKDGTREQFSREKIFNGIIRSAQKRPVSTDDIDEVVNRIEQKVRAQGDSEIESDVIGNLVMEELVELDEITYVRFASVYRSFKDVGELENLLKQMISKGSKVKPGKKDETK.

The interval 1–22 (MRCPKCQSLKSSVIDSRQAEDG) is disordered. Residues 3–34 (CPKCQSLKSSVIDSRQAEDGNTIRRRRSCDQC) fold into a zinc finger. The region spanning 49–139 (LVVVKKDGTR…VYRSFKDVGE (91 aa)) is the ATP-cone domain.

This sequence belongs to the NrdR family. Zn(2+) is required as a cofactor.

Its function is as follows. Negatively regulates transcription of bacterial ribonucleotide reductase nrd genes and operons by binding to NrdR-boxes. The protein is Transcriptional repressor NrdR of Streptococcus suis (strain 98HAH33).